We begin with the raw amino-acid sequence, 430 residues long: Histidine--tRNA ligase (430 aa).

This sequence belongs to the class-II aminoacyl-tRNA synthetase family. As to quaternary structure, homodimer.

It localises to the cytoplasm. It carries out the reaction tRNA(His) + L-histidine + ATP = L-histidyl-tRNA(His) + AMP + diphosphate + H(+). This is Histidine--tRNA ligase from Chlorobium luteolum (strain DSM 273 / BCRC 81028 / 2530) (Pelodictyon luteolum).